The primary structure comprises 905 residues: Stonin-2 (905 aa).

Disordered regions lie at residues 1 to 121, 178 to 205, and 244 to 263; these read MTTL…HQET, EQTS…VEME, and LPPV…SVIP. Low complexity predominate over residues 40–50; it reads SSSPDQSESSS. Residues 60-73 show a composition bias toward basic and acidic residues; sequence SQDHSHSEQDDSSE. Over residues 85–94 the composition is skewed to pro residues; the sequence is PGSPEQPPPD. Residues 178 to 196 are compositionally biased toward polar residues; that stretch reads EQTSGQASGADSTDNSSSL. Pro residues predominate over residues 244–256; the sequence is LPPVTSPLKPNTP. Thr255 is modified (phosphothreonine). Phosphoserine occurs at positions 281, 287, and 302. 2 consecutive short sequence motifs (NPF) follow at residues 313 to 315 and 329 to 331; these read NPF. The SHD domain maps to 427-560; it reads GWPMMLRIPE…DLPVLSMDLS (134 aa). In terms of domain architecture, MHD spans 568–878; the sequence is EEEITVDVRD…SYQVALGSIW (311 aa). Phosphoserine is present on Ser762.

Belongs to the Stoned B family. As to quaternary structure, interacts with the second C2 domain of synaptotagmins SYT1 and SYT2. Interacts with EPS15, EPS15R and ITSN1. Interacts indirectly with the AP-2 adapter complex. Interacts with TOR1A and COPS4; the interaction controls STON2 protein stability. In terms of processing, phosphorylated in vitro by PKD. Post-translationally, neddylated; deneddylated via its interaction with the COP9 signalosome (CSN) complex through TOR1A and COPS4. Ubiquitinated; leading to its degradation. Ubiquitous.

The protein resides in the cytoplasm. It localises to the membrane. Its subcellular location is the synapse. The protein localises to the synaptosome. Adapter protein involved in endocytic machinery. Involved in the synaptic vesicle recycling. May facilitate clathrin-coated vesicle uncoating. This chain is Stonin-2 (STON2), found in Homo sapiens (Human).